A 504-amino-acid chain; its full sequence is Anaerobic nitric oxide reductase transcription regulator NorR (504 aa).

Asp57 is subject to 4-aspartylphosphate. One can recognise a Sigma-54 factor interaction domain in the interval 187 to 416 (MIGLSPGMTQ…LEHAIHRAVV (230 aa)). ATP contacts are provided by residues 215–222 (GETGTGKE) and 278–287 (ADNGTLFLDE). Residues 479-498 (WAACARMLETDVANLHRLAK) constitute a DNA-binding region (H-T-H motif).

It functions in the pathway nitrogen metabolism; nitric oxide reduction. In terms of biological role, required for the expression of anaerobic nitric oxide (NO) reductase, acts as a transcriptional activator for at least the norVW operon. Activation also requires sigma-54. This is Anaerobic nitric oxide reductase transcription regulator NorR from Escherichia coli O45:K1 (strain S88 / ExPEC).